Consider the following 158-residue polypeptide: Snaclec mucetin subunit alpha (158 aa).

Positions Met-1 to Ala-23 are cleaved as a signal peptide. 3 disulfide bridges follow: Cys-27–Cys-38, Cys-55–Cys-152, and Cys-127–Cys-144. Residues Tyr-34–Lys-153 form the C-type lectin domain.

The protein belongs to the snaclec family. Dimer and tetramer of heterodimers of alpha and beta subunits ((alphabeta)(2) and (alphabeta)(4)); disulfide-linked. These two multimeric forms are found. The complex is glycosylated. As to expression, expressed by the venom gland.

Its subcellular location is the secreted. Functionally, potent platelet activator that acts via GPIb (GP1BA/GP1BB). After activation by the toxin, the receptor is redistributed on platelet surface thanks to cytoskeletal translocation. The indirect activation of integrin alpha-IIb/beta-3 (ITGA2B/ITGB3) also induced by the toxin is downstream the cytoskeletal translocation of GPIb. This is Snaclec mucetin subunit alpha from Protobothrops mucrosquamatus (Taiwan habu).